We begin with the raw amino-acid sequence, 154 residues long: Small ribosomal subunit protein bS6 (154 aa).

The tract at residues 94–154 is disordered; that stretch reads VKQEGPLPTP…SSQGKESQKS (61 aa). Residues 103–112 are compositionally biased toward polar residues; that stretch reads PRSSNKGYNQ. Over residues 113-139 the composition is skewed to basic and acidic residues; the sequence is SEKKDIESIDSTNKSEFKEEANDKKTA. Polar residues predominate over residues 140 to 154; it reads TSESTSSQGKESQKS.

This sequence belongs to the bacterial ribosomal protein bS6 family.

In terms of biological role, binds together with bS18 to 16S ribosomal RNA. The protein is Small ribosomal subunit protein bS6 of Prochlorococcus marinus subsp. pastoris (strain CCMP1986 / NIES-2087 / MED4).